A 105-amino-acid polypeptide reads, in one-letter code: MEQFLSIGVNHFLTISVLLFSLGMFAVMTRKNAIVILMGVELILNAANINFLTFSKYNGGMEGVMFSLFVIVLAAAEAAVALAIVINIFKTFKTVDVSSVDTMKE.

Helical transmembrane passes span 7-27 (IGVNHFLTISVLLFSLGMFAV), 34-54 (IVILMGVELILNAANINFLTF), and 66-86 (FSLFVIVLAAAEAAVALAIVI).

The protein belongs to the complex I subunit 4L family. As to quaternary structure, NDH-1 is composed of 14 different subunits. Subunits NuoA, H, J, K, L, M, N constitute the membrane sector of the complex.

It is found in the cell inner membrane. It catalyses the reaction a quinone + NADH + 5 H(+)(in) = a quinol + NAD(+) + 4 H(+)(out). Functionally, NDH-1 shuttles electrons from NADH, via FMN and iron-sulfur (Fe-S) centers, to quinones in the respiratory chain. The immediate electron acceptor for the enzyme in this species is believed to be a menaquinone. Couples the redox reaction to proton translocation (for every two electrons transferred, four hydrogen ions are translocated across the cytoplasmic membrane), and thus conserves the redox energy in a proton gradient. This Chlorobaculum parvum (strain DSM 263 / NCIMB 8327) (Chlorobium vibrioforme subsp. thiosulfatophilum) protein is NADH-quinone oxidoreductase subunit K.